Consider the following 238-residue polypeptide: Sugar fermentation stimulation protein homolog (238 aa).

It belongs to the SfsA family.

The sequence is that of Sugar fermentation stimulation protein homolog from Alkalilimnicola ehrlichii (strain ATCC BAA-1101 / DSM 17681 / MLHE-1).